Here is a 453-residue protein sequence, read N- to C-terminus: Allantoinase (453 aa).

Positions 59, 61, 146, 186, 242, and 315 each coordinate Zn(2+). N6-carboxylysine is present on Lys146.

It belongs to the metallo-dependent hydrolases superfamily. Allantoinase family. In terms of assembly, homotetramer. Zn(2+) is required as a cofactor. Carboxylation allows a single lysine to coordinate two zinc ions.

The catalysed reaction is (S)-allantoin + H2O = allantoate + H(+). It participates in nitrogen metabolism; (S)-allantoin degradation; allantoate from (S)-allantoin: step 1/1. Its function is as follows. Catalyzes the conversion of allantoin (5-ureidohydantoin) to allantoic acid by hydrolytic cleavage of the five-member hydantoin ring. The chain is Allantoinase from Escherichia coli O127:H6 (strain E2348/69 / EPEC).